Consider the following 107-residue polypeptide: Latency-related protein 2 (107 aa).

The span at methionine 1–threonine 44 shows a compositional bias: pro residues. The interval methionine 1–threonine 63 is disordered. 3 tandem repeats follow at residues alanine 2–histidine 17, alanine 18–histidine 33, and alanine 34–histidine 49. Residues alanine 2 to histidine 49 are 3 X 17 AA tandem repeats. Basic residues predominate over residues proline 46–arginine 58.

The chain is Latency-related protein 2 from Homo sapiens (Human).